The sequence spans 476 residues: Lipase (476 aa).

A signal peptide spans M1 to A23. The Charge relay system role is filled by S207. 3 Hemolysin-type calcium-binding repeats span residues I372–I389, E390–F407, and S410–L427. D437, D440, and D448 together coordinate Ca(2+).

Belongs to the AB hydrolase superfamily. Lipase family.

The catalysed reaction is a triacylglycerol + H2O = a diacylglycerol + a fatty acid + H(+). The polypeptide is Lipase (Pseudomonas fluorescens).